A 99-amino-acid polypeptide reads, in one-letter code: Large ribosomal subunit protein bL21 (99 aa).

The protein belongs to the bacterial ribosomal protein bL21 family. As to quaternary structure, part of the 50S ribosomal subunit. Contacts protein L20.

This protein binds to 23S rRNA in the presence of protein L20. The protein is Large ribosomal subunit protein bL21 of Mesoplasma florum (strain ATCC 33453 / NBRC 100688 / NCTC 11704 / L1) (Acholeplasma florum).